Here is a 337-residue protein sequence, read N- to C-terminus: Ketol-acid reductoisomerase (NADP(+)) (337 aa).

Residues 3 to 183 form the KARI N-terminal Rossmann domain; it reads VEVFYDDDAD…GGTRAGAIRT (181 aa). NADP(+) is bound by residues 26-29, S52, S54, and 84-87; these read YGSQ and DTAQ. Residue H109 is part of the active site. Residue G135 coordinates NADP(+). The region spanning 184-329 is the KARI C-terminal knotted domain; that stretch reads TFTEETETDL…SKLRGMMSWV (146 aa). The Mg(2+) site is built by D192, E196, E228, and E232. S253 serves as a coordination point for substrate.

The protein belongs to the ketol-acid reductoisomerase family. Mg(2+) serves as cofactor.

It carries out the reaction (2R)-2,3-dihydroxy-3-methylbutanoate + NADP(+) = (2S)-2-acetolactate + NADPH + H(+). The catalysed reaction is (2R,3R)-2,3-dihydroxy-3-methylpentanoate + NADP(+) = (S)-2-ethyl-2-hydroxy-3-oxobutanoate + NADPH + H(+). Its pathway is amino-acid biosynthesis; L-isoleucine biosynthesis; L-isoleucine from 2-oxobutanoate: step 2/4. It functions in the pathway amino-acid biosynthesis; L-valine biosynthesis; L-valine from pyruvate: step 2/4. In terms of biological role, involved in the biosynthesis of branched-chain amino acids (BCAA). Catalyzes an alkyl-migration followed by a ketol-acid reduction of (S)-2-acetolactate (S2AL) to yield (R)-2,3-dihydroxy-isovalerate. In the isomerase reaction, S2AL is rearranged via a Mg-dependent methyl migration to produce 3-hydroxy-3-methyl-2-ketobutyrate (HMKB). In the reductase reaction, this 2-ketoacid undergoes a metal-dependent reduction by NADPH to yield (R)-2,3-dihydroxy-isovalerate. The sequence is that of Ketol-acid reductoisomerase (NADP(+)) from Salinispora arenicola (strain CNS-205).